Consider the following 1232-residue polypeptide: Anoctamin-8 (1232 aa).

The interval 1–32 (MAEAASGAGGTSLEGERGKRPPPEGEPAAPAS) is disordered. Residue A2 is modified to N-acetylalanine. Residues 2–244 (AEAASGAGGT…DDICDYFGVK (243 aa)) lie on the Extracellular side of the membrane. The span at 14–23 (EGERGKRPPP) shows a compositional bias: basic and acidic residues. A helical membrane pass occupies residues 245-265 (IAMYFAWLGFYTSAMVYPAVF). Over 266 to 281 (GSVLYTFTEADQTSRD) the chain is Cytoplasmic. Residues 282–302 (VSCVVFALFNVIWSTLFLEEW) form a helical membrane-spanning segment. Topologically, residues 303 to 356 (KRRGAELAYKWGTLDSPGEAVEEPRPQFRGVRRISPITRAEEFYYPPWKRLLFQ) are extracellular. S318 carries the post-translational modification Phosphoserine. The chain crosses the membrane as a helical span at residues 357–377 (LLVSLPLCLACLVCVFLLMLG). The Cytoplasmic segment spans residues 378–400 (CFQLQELVLSVKGLPRLARFLPK). The chain crosses the membrane as a helical span at residues 401–421 (VMLALLVSVSAEGYKKLAIWL). Residues 422–437 (NDMENYRLESAYEKHL) are Extracellular-facing. The helical transmembrane segment at 438 to 458 (IIKVVLFQFVNSYLSLFYIGF) threads the bilayer. Over 459-750 (YLKDMERLKE…YEDTFQDYQE (292 aa)) the chain is Cytoplasmic. Residues 524–650 (RRLEPQADEG…SPTMVEKGLE (127 aa)) form a disordered region. Over residues 532–551 (EGGGGGSGGGGRRCLSGGCG) the composition is skewed to gly residues. The span at 582 to 606 (EEDEDDEEEEDEEEEEDEEEGEEGG) shows a compositional bias: acidic residues. Residue S669 is modified to Phosphoserine. The segment at 681–728 (RAGGEGRDQGPDGGPDPEPGSNSDSTRRQRRQNRSSWIDPPEEEHSPQ) is disordered. Residues 751–771 (MFVQFGYVVLFSSAFPLAALC) form a helical membrane-spanning segment. The Extracellular segment spans residues 772–807 (ALVNNLIEIRSDAFKLCTGLQRPFGQRVESIGQWQK). S801 is modified (phosphoserine; by FAM20C). Residues 808–828 (VMEAMGVLAIVVNCYLIGQCG) traverse the membrane as a helical segment. Residues 829–841 (QLQRLFPWLSPEA) lie on the Cytoplasmic side of the membrane. A helical membrane pass occupies residues 842-862 (AIVSVVVLEHFALLLKYLIHV). Residues 863-1232 (AIPDIPGWVA…QAVCWPSGWH (370 aa)) lie on the Extracellular side of the membrane. Disordered stretches follow at residues 888 to 970 (RHER…GSLL), 997 to 1152 (LAAA…WQWD), and 1174 to 1232 (PPCA…SGWH). A compositionally biased stretch (basic and acidic residues) spans 904-932 (RREEEERQRHAEHHARREHDSGGREEARA). Composition is skewed to low complexity over residues 933-953 (EGSG…AKGS) and 997-1006 (LAAAGAGATT). Asymmetric dimethylarginine; alternate is present on R1020. At R1020 the chain carries Omega-N-methylarginine; alternate. Basic and acidic residues predominate over residues 1031 to 1043 (KSPETRRDSERSH). Residues 1078–1087 (TPSSGSSRVQ) show a composition bias toward polar residues. Pro residues-rich tracts occupy residues 1130–1145 (PAPP…PTPP) and 1197–1221 (LPPP…PSPS).

It belongs to the anoctamin family. In terms of tissue distribution, expressed in embryonic stem cells, fetal brain and neural tissues.

It localises to the cell membrane. In terms of biological role, does not exhibit calcium-activated chloride channel (CaCC) activity. The protein is Anoctamin-8 (ANO8) of Homo sapiens (Human).